Consider the following 388-residue polypeptide: Zinc finger C2H2 protein ECU10_0150 (388 aa).

The C2H2-type zinc-finger motif lies at 299–322 (YKCGFCGKAFESEKFIFNHFNNKH).

In Encephalitozoon cuniculi (strain GB-M1) (Microsporidian parasite), this protein is Zinc finger C2H2 protein ECU10_0150.